A 161-amino-acid polypeptide reads, in one-letter code: Peroxynitrite isomerase 1 (161 aa).

Residues 17-23 carry the GXWXGXG motif; the sequence is GTWTGRG. H152 serves as a coordination point for heme b.

It belongs to the nitrobindin family. Homodimer. Heme b serves as cofactor.

It catalyses the reaction peroxynitrite = nitrate. It participates in nitrogen metabolism. Its function is as follows. Heme-binding protein able to scavenge peroxynitrite and to protect free L-tyrosine against peroxynitrite-mediated nitration, by acting as a peroxynitrite isomerase that converts peroxynitrite to nitrate. Therefore, this protein likely plays a role in peroxynitrite sensing and in the detoxification of reactive nitrogen and oxygen species (RNS and ROS, respectively). Is able to bind nitric oxide (NO) in vitro, but may act as a sensor of peroxynitrite levels in vivo. This is Peroxynitrite isomerase 1 from Mycolicibacterium paratuberculosis (strain ATCC BAA-968 / K-10) (Mycobacterium paratuberculosis).